Here is a 324-residue protein sequence, read N- to C-terminus: tRNA-cytidine(32) 2-sulfurtransferase (324 aa).

Residues 1–26 (MQDLIDSPTAARTPAEEKIRHEGNKL) form a disordered region. A compositionally biased stretch (basic and acidic residues) spans 14–26 (PAEEKIRHEGNKL). A PP-loop motif motif is present at residues 55 to 60 (SGGKDS). The [4Fe-4S] cluster site is built by Cys-130, Cys-133, and Cys-221. Positions 278–310 (RPDANGDTAFDPIDPEDPREDAGDACASSPADG) are disordered.

The protein belongs to the TtcA family. As to quaternary structure, homodimer. Requires Mg(2+) as cofactor. It depends on [4Fe-4S] cluster as a cofactor.

Its subcellular location is the cytoplasm. It carries out the reaction cytidine(32) in tRNA + S-sulfanyl-L-cysteinyl-[cysteine desulfurase] + AH2 + ATP = 2-thiocytidine(32) in tRNA + L-cysteinyl-[cysteine desulfurase] + A + AMP + diphosphate + H(+). It participates in tRNA modification. In terms of biological role, catalyzes the ATP-dependent 2-thiolation of cytidine in position 32 of tRNA, to form 2-thiocytidine (s(2)C32). The sulfur atoms are provided by the cysteine/cysteine desulfurase (IscS) system. This Bordetella petrii (strain ATCC BAA-461 / DSM 12804 / CCUG 43448) protein is tRNA-cytidine(32) 2-sulfurtransferase.